Consider the following 190-residue polypeptide: Small ribosomal subunit protein eS7 (190 aa).

Belongs to the eukaryotic ribosomal protein eS7 family.

The protein is Small ribosomal subunit protein eS7 (RPS7) of Avicennia marina (Grey mangrove).